Reading from the N-terminus, the 120-residue chain is ATP synthase subunit a (120 aa).

A run of 4 helical transmembrane segments spans residues 2 to 22, 29 to 49, 59 to 79, and 94 to 116; these read FFYS…YSYL, FFPF…VGIV, LNIT…LGFY, and IPFV…RSVG.

It belongs to the ATPase A chain family. In terms of assembly, F-type ATPases have 2 components, CF(1) - the catalytic core - and CF(0) - the membrane proton channel. CF(1) has five subunits: alpha(3), beta(3), gamma(1), delta(1), epsilon(1). CF(0) has three main subunits: a, b and c.

It is found in the mitochondrion inner membrane. Functionally, mitochondrial membrane ATP synthase (F(1)F(0) ATP synthase or Complex V) produces ATP from ADP in the presence of a proton gradient across the membrane which is generated by electron transport complexes of the respiratory chain. F-type ATPases consist of two structural domains, F(1) - containing the extramembraneous catalytic core and F(0) - containing the membrane proton channel, linked together by a central stalk and a peripheral stalk. During catalysis, ATP synthesis in the catalytic domain of F(1) is coupled via a rotary mechanism of the central stalk subunits to proton translocation. Key component of the proton channel; it may play a direct role in the translocation of protons across the membrane. The chain is ATP synthase subunit a (ATP6) from Naegleria fowleri (Brain eating amoeba).